A 514-amino-acid polypeptide reads, in one-letter code: 2,3-bisphosphoglycerate-independent phosphoglycerate mutase (514 aa).

Asp-14 and Ser-64 together coordinate Mn(2+). Ser-64 functions as the Phosphoserine intermediate in the catalytic mechanism. Residues His-125, 155–156 (RD), Arg-187, Arg-193, 263–266 (RADR), and Lys-337 contribute to the substrate site. Residues Asp-404, His-408, Asp-445, His-446, and His-464 each contribute to the Mn(2+) site.

It belongs to the BPG-independent phosphoglycerate mutase family. In terms of assembly, monomer. Mn(2+) serves as cofactor.

The enzyme catalyses (2R)-2-phosphoglycerate = (2R)-3-phosphoglycerate. It participates in carbohydrate degradation; glycolysis; pyruvate from D-glyceraldehyde 3-phosphate: step 3/5. Its function is as follows. Catalyzes the interconversion of 2-phosphoglycerate and 3-phosphoglycerate. The polypeptide is 2,3-bisphosphoglycerate-independent phosphoglycerate mutase (Serratia proteamaculans (strain 568)).